The sequence spans 427 residues: 3-phosphoshikimate 1-carboxyvinyltransferase (427 aa).

Residues K20, S21, and R25 each coordinate 3-phosphoshikimate. Phosphoenolpyruvate is bound at residue K20. G92 and R120 together coordinate phosphoenolpyruvate. The 3-phosphoshikimate site is built by S166, Q168, D312, and K339. Q168 provides a ligand contact to phosphoenolpyruvate. D312 acts as the Proton acceptor in catalysis. Phosphoenolpyruvate-binding residues include R343 and R385.

It belongs to the EPSP synthase family. As to quaternary structure, monomer.

It localises to the cytoplasm. It catalyses the reaction 3-phosphoshikimate + phosphoenolpyruvate = 5-O-(1-carboxyvinyl)-3-phosphoshikimate + phosphate. The protein operates within metabolic intermediate biosynthesis; chorismate biosynthesis; chorismate from D-erythrose 4-phosphate and phosphoenolpyruvate: step 6/7. Functionally, catalyzes the transfer of the enolpyruvyl moiety of phosphoenolpyruvate (PEP) to the 5-hydroxyl of shikimate-3-phosphate (S3P) to produce enolpyruvyl shikimate-3-phosphate and inorganic phosphate. This chain is 3-phosphoshikimate 1-carboxyvinyltransferase, found in Streptococcus pneumoniae (strain 70585).